A 1165-amino-acid polypeptide reads, in one-letter code: uncharacterized protein (1165 aa).

Residues 422–442 (EAAPPRPPRKSKAPEPTGDKA) form a disordered region.

This is an uncharacterized protein from Frog virus 3 (isolate Goorha) (FV-3).